Here is a 358-residue protein sequence, read N- to C-terminus: C-X-C chemokine receptor type 4-A (358 aa).

An important for chemokine binding and signaling region spans residues 1 to 25 (MDGFSGGIDINIFDGNSTENGSGDF). Topologically, residues 1-44 (MDGFSGGIDINIFDGNSTENGSGDFEDFIEPCFMHENSDFNRIF) are extracellular. Asparagine 16 and asparagine 20 each carry an N-linked (GlcNAc...) asparagine glycan. Disulfide bonds link cysteine 32-cysteine 281 and cysteine 113-cysteine 190. The helical transmembrane segment at 45–67 (LPTIYSFIFLLGIIGNGLVVVVM) threads the bilayer. The Cytoplasmic segment spans residues 68 to 81 (GYQKKSRTMTDKYR). The helical transmembrane segment at 82–103 (LHLSVADLLFVFTLPFWSVDAA) threads the bilayer. The chemokine binding stretch occupies residues 98–101 (WSVD). The Extracellular segment spans residues 104-114 (IGWYFKEFLCK). Residues 115 to 134 (AVHVIYTVNLYSSVLILAFI) traverse the membrane as a helical segment. Residues 117 to 121 (HVIYT) form a chemokine binding region. The Cytoplasmic portion of the chain corresponds to 135–158 (SLDRYLAIVHATNSQGSRKMLADK). Residues 139–151 (YLAIVHATNSQGS) are involved in dimerization; when bound to chemokine. Residues 159–178 (VVYAGVWLPALLLTVPDLVF) traverse the membrane as a helical segment. Over 179-202 (ARVSDENGQFVCDRIYPIENRETW) the chain is Extracellular. The segment at 190–194 (CDRIY) is chemokine binding, important for signaling. The chain crosses the membrane as a helical span at residues 203 to 223 (TVGFRFLHITVGLILPGLIIL). Residues 224–248 (ICYCVIISKLSHSKGHQKRKALKTT) lie on the Cytoplasmic side of the membrane. The chain crosses the membrane as a helical span at residues 249 to 268 (VILILAFFACWLPYYVCLTT). Over 269–289 (DTFMLLGLVKGDCIWENTLHM) the chain is Extracellular. A helical membrane pass occupies residues 290–309 (AISITEALAFFHCCLNPILY). Topologically, residues 310–358 (AFLGAKFKTSAQNAFTSVSRGSSLKILSKKRAGLSSVSTESESSSFHSS) are cytoplasmic. Residues 338-358 (KKRAGLSSVSTESESSSFHSS) are disordered. Low complexity predominate over residues 344–358 (SSVSTESESSSFHSS).

This sequence belongs to the G-protein coupled receptor 1 family. In terms of assembly, monomer. Can form dimers. Post-translationally, sulfation is required for efficient binding of cxcl12/sdf-1alpha and promotes its dimerization. In terms of processing, O- and N-glycosylated. Highly expressed in the embryonic nervous system including forebrain, hindbrain and sensory organs (including eye), and in neural crest cells. Also expressed in the dorsal lateral plate, the first site of definitive hematopoiesis in the embryo. Appears in migrating presumptive primordial germ cells (pPGCs) from stage 24. Expressed in the epidermis at stage 40. In the adult, highly expressed in the spleen with lower levels of expression in the liver and very low levels in kidney, heart, skin and brain.

Its subcellular location is the cell membrane. It is found in the cytoplasm. The protein resides in the nucleus. The protein localises to the early endosome. It localises to the late endosome. Its subcellular location is the lysosome. Receptor for the C-X-C chemokine cxcl12/sdf-1. Transduces a signal by increasing the intracellular level of calcium ions. Signaling with cxcl12/sdf-1 mediates the directional movement of mesodermal cells during gastrulation. May play a role in the migration of embryonic presumptive primordial germ cells (pPGCs). May also be involved in regulating the migration of hematopoietic stem cells into the larval liver. The chain is C-X-C chemokine receptor type 4-A (cxcr4-a) from Xenopus laevis (African clawed frog).